The chain runs to 283 residues: MGVILEGKPVAEKLEKEIKEKIEIYKTKGIIPNLCIVKVGENEEAEAYAKSIERFFSRIGINVERKNFAENVSLLEFQKALKELEKNNKVHGILILRPLSEELERQKAFRFLSPDKDVEGITYENLGKLFVGEKCFHPCTPQAVIELLDFYKISVEGKDVVVVGRSISVGKPLSILLLNRNATVTICHSKTKNLEELTRRAEVLVAAVGRPHFIGKDMVKEGQVVIDIGTNVVEGKLVGDVNFEEVKDKVGYITPVPGGIGIITTRVLAMNLLKAVEKNEARN.

NADP(+)-binding positions include 164–166 (GRS), S189, and T230.

The protein belongs to the tetrahydrofolate dehydrogenase/cyclohydrolase family. Homodimer.

The catalysed reaction is (6R)-5,10-methylene-5,6,7,8-tetrahydrofolate + NADP(+) = (6R)-5,10-methenyltetrahydrofolate + NADPH. The enzyme catalyses (6R)-5,10-methenyltetrahydrofolate + H2O = (6R)-10-formyltetrahydrofolate + H(+). Its pathway is one-carbon metabolism; tetrahydrofolate interconversion. In terms of biological role, catalyzes the oxidation of 5,10-methylenetetrahydrofolate to 5,10-methenyltetrahydrofolate and then the hydrolysis of 5,10-methenyltetrahydrofolate to 10-formyltetrahydrofolate. The protein is Bifunctional protein FolD of Dictyoglomus thermophilum (strain ATCC 35947 / DSM 3960 / H-6-12).